The primary structure comprises 203 residues: Small ribosomal subunit protein uS4 (203 aa).

An S4 RNA-binding domain is found at 93-156; it reads RRLDNVVYRL…AKVPAILEAV (64 aa).

This sequence belongs to the universal ribosomal protein uS4 family. As to quaternary structure, part of the 30S ribosomal subunit. Contacts protein S5. The interaction surface between S4 and S5 is involved in control of translational fidelity.

In terms of biological role, one of the primary rRNA binding proteins, it binds directly to 16S rRNA where it nucleates assembly of the body of the 30S subunit. Functionally, with S5 and S12 plays an important role in translational accuracy. This chain is Small ribosomal subunit protein uS4, found in Streptococcus thermophilus (strain CNRZ 1066).